We begin with the raw amino-acid sequence, 21 residues long: Large ribosomal subunit protein uL10 (21 aa).

It belongs to the universal ribosomal protein uL10 family. As to quaternary structure, part of the ribosomal stalk of the 50S ribosomal subunit. The N-terminus interacts with L11 and the large rRNA to form the base of the stalk. The C-terminus forms an elongated spine to which L12 dimers bind in a sequential fashion forming a multimeric L10(L12)X complex.

Forms part of the ribosomal stalk, playing a central role in the interaction of the ribosome with GTP-bound translation factors. The polypeptide is Large ribosomal subunit protein uL10 (rplJ) (Proteus vulgaris).